The sequence spans 509 residues: Histidine ammonia-lyase (509 aa).

Residues 142–144 (ASG) constitute a cross-link (5-imidazolinone (Ala-Gly)). Serine 143 bears the 2,3-didehydroalanine (Ser) mark.

It belongs to the PAL/histidase family. Contains an active site 4-methylidene-imidazol-5-one (MIO), which is formed autocatalytically by cyclization and dehydration of residues Ala-Ser-Gly.

The protein resides in the cytoplasm. The enzyme catalyses L-histidine = trans-urocanate + NH4(+). It participates in amino-acid degradation; L-histidine degradation into L-glutamate; N-formimidoyl-L-glutamate from L-histidine: step 1/3. The chain is Histidine ammonia-lyase from Sphingopyxis alaskensis (strain DSM 13593 / LMG 18877 / RB2256) (Sphingomonas alaskensis).